The chain runs to 618 residues: MTQEYDNKRPVLVLQNEALYPQRRSYTSEDEAWKSFLENPLTAATKAMMSINGDEDSAAALGLLYDYYKVPRERRSSTAKPEVEHPEPDHSKRNSIPIVTEQPLISAGENRVQVLKNVPFNIVLPHGNQLGIDKRGHLTAPDTTVTVSIATMPTHSIKTETQPHGFAVGIPPAVYHPEPTERVVVFDRNLNTDQFSSGAQAPNAQRRTPDSTFSETFKEGVQEVFFPSDLSLRMPGMNSEDYVFDSVSGNNFEYTLEASKSLRQKPGDSTMTYLNKGQFYPITLKEVSSSEGIHHPISKVRSVIMVVFAEDKSREDQLRHWKYWHSRQHTAKQRCIDIADYKESFNTISNIEEIAYNAISFTWDINDEAKVFISVNCLSTDFSSQKGVKGLPLNIQVDTYSYNNRSNKPVHRAYCQIKVFCDKGAERKIRDEERKQSKRKVSDVKVPLLPSHKRMDITVFKPFIDLDTQPVLFIPDVHFANLQRGTHVLPIASEELEGEGSVLKRGPYGTEDDFAVPPSTKLARIEEPKRVLLYVRKESEEVFDALMLKTPSLKGLMEAISDKYDVPHDKIGKIFKKCKKGILVNMDDNIVKHYSNEDTFQLQIEEAGGSYKLTLTEI.

The transcription activation stretch occupies residues M1–S91. A compositionally biased stretch (basic and acidic residues) spans R74 to K92. The interval R74–N94 is disordered. T208 is subject to Phosphothreonine. The Grh/CP2 DB domain occupies S248–I474. Interaction with DNA stretches follow at residues T380 to K389 and R427 to R430.

This sequence belongs to the grh/CP2 family. Grainyhead subfamily. In terms of assembly, binds DNA as homodimer. Homodimer, also forms heterodimers with GRHL2 or GRHL3. Methylation at Arg-9 and Lys-116 may be involved in regulating transcriptional activation. As to expression, isoform 1 is highly expressed in brain, pancreas, tonsil, placenta and kidney. Isoform 2 is highly expressed in brain and liver. Expressed at very low levels in non-steroidogenic cells.

The protein localises to the nucleus. Transcription factor involved in epithelial development. Binds directly to the consensus DNA sequence 5'-AACCGGTT-3'. Important regulator of DSG1 in the context of hair anchorage and epidermal differentiation, participates in the maintenance of the skin barrier. There is no genetic interaction with GRHL3, nor functional cooperativity due to diverse target gene selectivity during epithelia development. May play a role in regulating glucose homeostasis and insulin signaling. Its function is as follows. Functions as a transcription activator. In terms of biological role, may function as a repressor in tissues where both isoform 1 and isoform 2 are expressed. In Homo sapiens (Human), this protein is Grainyhead-like protein 1 homolog.